We begin with the raw amino-acid sequence, 155 residues long: Small ribosomal subunit protein uS7cz/uS7cy (155 aa).

The protein belongs to the universal ribosomal protein uS7 family. As to quaternary structure, part of the 30S ribosomal subunit.

The protein resides in the plastid. It localises to the chloroplast. One of the primary rRNA binding proteins, it binds directly to 16S rRNA where it nucleates assembly of the head domain of the 30S subunit. This is Small ribosomal subunit protein uS7cz/uS7cy (rps7-A) from Eucalyptus globulus subsp. globulus (Tasmanian blue gum).